The following is a 454-amino-acid chain: UDP-N-acetylmuramoylalanine--D-glutamate ligase (454 aa).

118–124 (GTNGKTT) serves as a coordination point for ATP.

It belongs to the MurCDEF family.

It is found in the cytoplasm. The enzyme catalyses UDP-N-acetyl-alpha-D-muramoyl-L-alanine + D-glutamate + ATP = UDP-N-acetyl-alpha-D-muramoyl-L-alanyl-D-glutamate + ADP + phosphate + H(+). It functions in the pathway cell wall biogenesis; peptidoglycan biosynthesis. Its function is as follows. Cell wall formation. Catalyzes the addition of glutamate to the nucleotide precursor UDP-N-acetylmuramoyl-L-alanine (UMA). In Thermosynechococcus vestitus (strain NIES-2133 / IAM M-273 / BP-1), this protein is UDP-N-acetylmuramoylalanine--D-glutamate ligase.